The following is a 303-amino-acid chain: Protoheme IX farnesyltransferase 1 (303 aa).

Transmembrane regions (helical) follow at residues 18-38, 42-62, 91-111, 114-134, 139-159, 169-189, 213-233, 235-255, and 274-294; these read PGIIMGNLISVAGGFLLAAQG, LTLMFATMIGLSLVVASGCAV, AVLSFGIGLGIIGFAMLAIFT, LAVLFAAIGYVVYVGVYSLYM, VYGTLVGSFSGAVPPVVGYCA, VILLLMFSLWQMPHSYAIAIF, LHIVLYIAVFAVVSALLPLAG, TGIAFMAVTFATSLWWLAMAL, and FSIITITALSVTMALDFQVVA.

It belongs to the UbiA prenyltransferase family. Protoheme IX farnesyltransferase subfamily.

The protein localises to the cell inner membrane. The enzyme catalyses heme b + (2E,6E)-farnesyl diphosphate + H2O = Fe(II)-heme o + diphosphate. Its pathway is porphyrin-containing compound metabolism; heme O biosynthesis; heme O from protoheme: step 1/1. Functionally, converts heme B (protoheme IX) to heme O by substitution of the vinyl group on carbon 2 of heme B porphyrin ring with a hydroxyethyl farnesyl side group. The protein is Protoheme IX farnesyltransferase 1 of Shewanella frigidimarina (strain NCIMB 400).